We begin with the raw amino-acid sequence, 486 residues long: Transcriptional regulator ERG (486 aa).

Over residues 41–54 (TASSSSDYGQTSKM) the composition is skewed to polar residues. 2 disordered regions span residues 41 to 62 (TASSSSDYGQTSKMSPRVPQQD) and 79 to 99 (PSQVNGSRNSPDECSVNKGGK). Phosphoserine is present on residues Ser55, Ser88, and Ser103. The PNT domain occupies 120–206 (VPPPNMTTNE…SHLHYLRETP (87 aa)). Residues 249–311 (QRITTRPDLP…ILGPTSSRLA (63 aa)) are disordered. A compositionally biased stretch (polar residues) spans 271-284 (SHLTPQSKAAQPSP). Lys289 is covalently cross-linked (Glycyl lysine isopeptide (Lys-Gly) (interchain with G-Cter in SUMO2)). The ETS DNA-binding region spans 318–398 (IQLWQFLLEL…HGKRYAYKFD (81 aa)).

Belongs to the ETS family. Identified in a IGF2BP1-dependent mRNP granule complex containing untranslated mRNAs. Interacts with SETDB1.

The protein resides in the nucleus. It localises to the cytoplasm. In terms of biological role, transcriptional regulator. May participate in transcriptional regulation through the recruitment of SETDB1 histone methyltransferase and subsequent modification of local chromatin structure. The polypeptide is Transcriptional regulator ERG (Erg) (Mus musculus (Mouse)).